Reading from the N-terminus, the 622-residue chain is Pentatricopeptide repeat-containing protein At5g06540 (622 aa).

PPR repeat units follow at residues 81–115 (NLFVFNLLIRCFSTGAEPSKAFGFYTQMLKSRIWP), 116–150 (DNITFPFLIKASSEMECVLVGEQTHSQIVRFGFQN), 151–181 (DVYVENSLVHMYANCGFIAAAGRIFGQMGFR), 182–212 (DVVSWTSMVAGYCKCGMVENAREMFDEMPHR), 213–247 (NLFTWSIMINGYAKNNCFEKAIDLFEFMKREGVVA), 248–282 (NETVMVSVISSCAHLGALEFGERAYEYVVKSHMTV), 283–313 (NLILGTALVDMFWRCGDIEKAIHVFEGLPET), 314–348 (DSLSWSSIIKGLAVHGHAHKAMHYFSQMISLGFIP), 349–384 (RDVTFTAVLSACSHGGLVEKGLEIYENMKKDHGIEP), and 385–419 (RLEHYGCIVDMLGRAGKLAEAENFILKMHVKPNAP). The interval 420-495 (ILGALLGACK…PPGWSLIEID (76 aa)) is type E motif. Positions 496-527 (GKINKFTMGDDQKHPEMGKIRRKWEEILGKIR) are type E(+) motif. Residues 528–622 (LIGYKGNTGD…NGVCSCRDYW (95 aa)) are type DYW motif.

Belongs to the PPR family. PCMP-H subfamily.

In Arabidopsis thaliana (Mouse-ear cress), this protein is Pentatricopeptide repeat-containing protein At5g06540 (PCMP-H88).